We begin with the raw amino-acid sequence, 249 residues long: ATP synthase subunit a, chloroplastic (249 aa).

5 consecutive transmembrane segments (helical) span residues 40 to 60, 97 to 117, 136 to 156, 201 to 221, and 222 to 242; these read QVLI…VLAI, VPFI…GALL, INTT…AGLS, LVVV…VMFL, and GLFT…AYIG.

This sequence belongs to the ATPase A chain family. As to quaternary structure, F-type ATPases have 2 components, CF(1) - the catalytic core - and CF(0) - the membrane proton channel. CF(1) has five subunits: alpha(3), beta(3), gamma(1), delta(1), epsilon(1). CF(0) has four main subunits: a, b, b' and c.

Its subcellular location is the plastid. It is found in the chloroplast thylakoid membrane. Its function is as follows. Key component of the proton channel; it plays a direct role in the translocation of protons across the membrane. The chain is ATP synthase subunit a, chloroplastic from Lepidium virginicum (Virginia pepperweed).